Consider the following 288-residue polypeptide: Nucleotide-binding protein Neut_1559 (288 aa).

Residue 8 to 15 participates in ATP binding; it reads GLSGSGKS. 57-60 is a GTP binding site; sequence DMRS.

The protein belongs to the RapZ-like family.

Its function is as follows. Displays ATPase and GTPase activities. This is Nucleotide-binding protein Neut_1559 from Nitrosomonas eutropha (strain DSM 101675 / C91 / Nm57).